Consider the following 319-residue polypeptide: Olfactory receptor 56B4 (319 aa).

Residues 1-31 (MDTSTSVTYDSSLQISQFILMGLPGIHEWQH) are Extracellular-facing. The chain crosses the membrane as a helical span at residues 32 to 52 (WLSLPLTLLYLLALGANLLII). The Cytoplasmic portion of the chain corresponds to 53–60 (ITIQHETV). The helical transmembrane segment at 61–81 (LHEPMYHLLGILAVVDIGLAT) threads the bilayer. Residues 82–105 (TIMPKILAIFWFDAKAISLPMCFA) lie on the Extracellular side of the membrane. An intrachain disulfide couples Cys103 to Cys195. The chain crosses the membrane as a helical span at residues 106 to 126 (QIYAIHCFFCIESGIFLCMAV). At 127 to 145 (DRYIAICRPLQYPSIVTKA) the chain is on the cytoplasmic side. Residues 146-166 (FVFKATGFIMLRNGLLTIPVP) form a helical membrane-spanning segment. The Extracellular portion of the chain corresponds to 167 to 202 (ILAAQRHYCSRNEIEHCLCSNLGVISLACDDITVNK). The helical transmembrane segment at 203-223 (FYQLMLAWVLVGSDMALVFSS) threads the bilayer. Residues 224–243 (YAVILHSVLRLNSAEAMSKA) are Cytoplasmic-facing. Residues 244–263 (LSTCSSHLILILFHTGIIVL) traverse the membrane as a helical segment. At 264 to 277 (SVTHLAEKKIPLIP) the chain is on the extracellular side. The helical transmembrane segment at 278 to 298 (VFLNVLHNVIPPALNPLACAL) threads the bilayer. At 299-319 (RMHKLRLGFQRLLGLGQDVSK) the chain is on the cytoplasmic side.

This sequence belongs to the G-protein coupled receptor 1 family.

Its subcellular location is the cell membrane. Its function is as follows. Odorant receptor. In Homo sapiens (Human), this protein is Olfactory receptor 56B4 (OR56B4).